A 790-amino-acid chain; its full sequence is Endonuclease MutS2 (790 aa).

ATP is bound at residue 334–341 (GPNTGGKT). Positions 715–790 (IDVRGQNLEE…GMGVTIVHLK (76 aa)) constitute a Smr domain.

It belongs to the DNA mismatch repair MutS family. MutS2 subfamily. Homodimer. Binds to stalled ribosomes, contacting rRNA.

Functionally, endonuclease that is involved in the suppression of homologous recombination and thus may have a key role in the control of bacterial genetic diversity. Acts as a ribosome collision sensor, splitting the ribosome into its 2 subunits. Detects stalled/collided 70S ribosomes which it binds and splits by an ATP-hydrolysis driven conformational change. Acts upstream of the ribosome quality control system (RQC), a ribosome-associated complex that mediates the extraction of incompletely synthesized nascent chains from stalled ribosomes and their subsequent degradation. Probably generates substrates for RQC. This chain is Endonuclease MutS2, found in Alkaliphilus oremlandii (strain OhILAs) (Clostridium oremlandii (strain OhILAs)).